Here is a 222-residue protein sequence, read N- to C-terminus: uncharacterized protein (222 aa).

Helical transmembrane passes span 26–46 (YGLLALTLAFSGLVAYVSQQM), 48–68 (LPYPNVFVVLIGFYGLFFLTV), 75–95 (WGLVSTFALTGFMGYTLGPIL), 107–127 (VITSAFAMTALVFFGLSAYVL), 139–159 (FITAGFFVLLGAVLVSLFFQI), 166–186 (ISAGFVLFSSAMILYQTSAII), and 198–218 (ISLYVSIYNLFISLLQIFGIA).

It belongs to the BI1 family.

The protein localises to the cell membrane. This is an uncharacterized protein from Pseudomonas aeruginosa (strain ATCC 15692 / DSM 22644 / CIP 104116 / JCM 14847 / LMG 12228 / 1C / PRS 101 / PAO1).